The primary structure comprises 1059 residues: Nonsense-mediated mRNA decay factor SMG7 (1059 aa).

TPR repeat units lie at residues D149–L183 and A184–S217. The span at S806–S817 shows a compositional bias: polar residues. Disordered stretches follow at residues S806–P826, H927–N955, S987–T1015, and S1040–V1059.

In terms of assembly, interacts with EXA1. Expressed in flowers and at lower levels in stems and leaves.

It is found in the cytoplasm. The protein localises to the P-body. In terms of biological role, plays multiple roles in growth and development. Involved in nonsense-mediated mRNA decay (NMD). May provide a link to the mRNA degradation machinery to initiate NMD and serve as an adapter for UPF proteins function. Required for meiotic progression through anaphase II of pollen mother cells. May counteract cyclin-dependent kinase (CDK) activity at the end of meiosis. May play a role in plant defense through its involvement in NMD. Together with EXA1, helps to restrict cell death induction during pathogen infection in a salicylic acid- (SA) and reactive oxygen species- (ROS) independent manner. The polypeptide is Nonsense-mediated mRNA decay factor SMG7 (Arabidopsis thaliana (Mouse-ear cress)).